Consider the following 161-residue polypeptide: Cyclic pyranopterin monophosphate synthase (161 aa).

Residues 75–77 (LCH) and 113–114 (ME) each bind substrate. Asp-128 is a catalytic residue.

Belongs to the MoaC family. In terms of assembly, homohexamer; trimer of dimers.

The enzyme catalyses (8S)-3',8-cyclo-7,8-dihydroguanosine 5'-triphosphate = cyclic pyranopterin phosphate + diphosphate. The protein operates within cofactor biosynthesis; molybdopterin biosynthesis. Its function is as follows. Catalyzes the conversion of (8S)-3',8-cyclo-7,8-dihydroguanosine 5'-triphosphate to cyclic pyranopterin monophosphate (cPMP). The sequence is that of Cyclic pyranopterin monophosphate synthase from Edwardsiella ictaluri (strain 93-146).